Here is a 530-residue protein sequence, read N- to C-terminus: GATA zinc finger domain-containing protein 4 (530 aa).

Disordered regions lie at residues 1–27 (MSIN…FWDN) and 212–386 (STVV…INNN). Composition is skewed to low complexity over residues 7–17 (NNNKNNNNKNN), 216–290 (SNSP…FNNN), and 299–386 (NSNN…INNN). The GATA-type zinc finger occupies 494–518 (CSMCNIKESISWIKTMVNGQLCNAC).

The sequence is that of GATA zinc finger domain-containing protein 4 (gtaD) from Dictyostelium discoideum (Social amoeba).